The chain runs to 181 residues: Inner membrane-spanning protein YciB (181 aa).

The next 5 membrane-spanning stretches (helical) occupy residues 22 to 42 (IYTATGALIVATAVQLILTYV), 50 to 70 (MQLITFIMVTVFGGMTIFLHD), 80 to 100 (IVYAVFAAGLIIAQILGRPII), 118 to 138 (INYAWILFFTACSIANLYVAF), and 148 to 168 (FKVFGLLGLTFIYTLLTGMYV).

This sequence belongs to the YciB family.

Its subcellular location is the cell inner membrane. Functionally, plays a role in cell envelope biogenesis, maintenance of cell envelope integrity and membrane homeostasis. The protein is Inner membrane-spanning protein YciB of Aliivibrio salmonicida (strain LFI1238) (Vibrio salmonicida (strain LFI1238)).